The following is a 156-amino-acid chain: Ribosome maturation factor RimP (156 aa).

This sequence belongs to the RimP family.

It localises to the cytoplasm. In terms of biological role, required for maturation of 30S ribosomal subunits. In Prochlorococcus marinus (strain NATL1A), this protein is Ribosome maturation factor RimP.